We begin with the raw amino-acid sequence, 262 residues long: Small ribosomal subunit protein uS2 (262 aa).

It belongs to the universal ribosomal protein uS2 family.

In Azobacteroides pseudotrichonymphae genomovar. CFP2, this protein is Small ribosomal subunit protein uS2.